The primary structure comprises 196 residues: Probable malonic semialdehyde reductase RutE (196 aa).

Belongs to the nitroreductase family. HadB/RutE subfamily. The cofactor is FMN.

It carries out the reaction 3-hydroxypropanoate + NADP(+) = 3-oxopropanoate + NADPH + H(+). In terms of biological role, may reduce toxic product malonic semialdehyde to 3-hydroxypropionic acid, which is excreted. The protein is Probable malonic semialdehyde reductase RutE of Escherichia coli (strain K12 / MC4100 / BW2952).